A 100-amino-acid chain; its full sequence is Large ribosomal subunit protein uL23 (100 aa).

It belongs to the universal ribosomal protein uL23 family. As to quaternary structure, part of the 50S ribosomal subunit. Contacts protein L29, and trigger factor when it is bound to the ribosome.

Functionally, one of the early assembly proteins it binds 23S rRNA. One of the proteins that surrounds the polypeptide exit tunnel on the outside of the ribosome. Forms the main docking site for trigger factor binding to the ribosome. The protein is Large ribosomal subunit protein uL23 of Thermotoga neapolitana (strain ATCC 49049 / DSM 4359 / NBRC 107923 / NS-E).